The chain runs to 315 residues: Putative HTH-type transcriptional regulatory protein PH1808 (315 aa).

Positions L131–L189 constitute an HTH cro/C1-type domain. Residues I142–K161 constitute a DNA-binding region (H-T-H motif).

The polypeptide is Putative HTH-type transcriptional regulatory protein PH1808 (Pyrococcus horikoshii (strain ATCC 700860 / DSM 12428 / JCM 9974 / NBRC 100139 / OT-3)).